The sequence spans 403 residues: CCA-adding enzyme (403 aa).

2 residues coordinate ATP: glycine 32 and arginine 35. CTP-binding residues include glycine 32 and arginine 35. 2 residues coordinate Mg(2+): aspartate 45 and aspartate 47. Arginine 116, aspartate 159, arginine 162, arginine 165, and arginine 168 together coordinate ATP. CTP-binding residues include arginine 116, aspartate 159, arginine 162, arginine 165, and arginine 168.

This sequence belongs to the tRNA nucleotidyltransferase/poly(A) polymerase family. Bacterial CCA-adding enzyme type 3 subfamily. As to quaternary structure, homodimer. Mg(2+) is required as a cofactor.

It carries out the reaction a tRNA precursor + 2 CTP + ATP = a tRNA with a 3' CCA end + 3 diphosphate. The catalysed reaction is a tRNA with a 3' CCA end + 2 CTP + ATP = a tRNA with a 3' CCACCA end + 3 diphosphate. Functionally, catalyzes the addition and repair of the essential 3'-terminal CCA sequence in tRNAs without using a nucleic acid template. Adds these three nucleotides in the order of C, C, and A to the tRNA nucleotide-73, using CTP and ATP as substrates and producing inorganic pyrophosphate. tRNA 3'-terminal CCA addition is required both for tRNA processing and repair. Also involved in tRNA surveillance by mediating tandem CCA addition to generate a CCACCA at the 3' terminus of unstable tRNAs. While stable tRNAs receive only 3'-terminal CCA, unstable tRNAs are marked with CCACCA and rapidly degraded. This Leuconostoc citreum (strain KM20) protein is CCA-adding enzyme.